Consider the following 771-residue polypeptide: Ribonucleoside-diphosphate reductase large subunit (771 aa).

An ATP-cone domain is found at 1-92 (MFVIKRNGYK…ISNLHKETKK (92 aa)). Residues 5-6 (KR), 11-17 (ENVMFDK), T53, D57, and K88 contribute to the ATP site. The GDP site is built by S202 and S217. Residues 226–228 (DSI), K243, and R256 contribute to the dTTP site. N427 lines the GDP pocket. N427 acts as the Proton acceptor in catalysis. Catalysis depends on C429, which acts as the Cysteine radical intermediate. Residues E431 and 603–606 (TAST) contribute to the GDP site. Residue E431 is the Proton acceptor of the active site.

This sequence belongs to the ribonucleoside diphosphate reductase large chain family. As to quaternary structure, interacts with RNR2/OPG047 subunit. The cofactor is Mg(2+).

The catalysed reaction is a 2'-deoxyribonucleoside 5'-diphosphate + [thioredoxin]-disulfide + H2O = a ribonucleoside 5'-diphosphate + [thioredoxin]-dithiol. Its function is as follows. Ribonucleoside-diphosphate reductase holoenzyme provides the precursors necessary for viral DNA synthesis. Allows virus growth in non-dividing cells. Catalyzes the biosynthesis of deoxyribonucleotides from the corresponding ribonucleotides. This is Ribonucleoside-diphosphate reductase large subunit (OPG080) from Monkeypox virus.